The sequence spans 615 residues: Putative binding protein BruAb2_0648 (615 aa).

A signal peptide spans 1–29; that stretch reads MLNRFIAFFRSVFLIGLVATAFGALPARA.

Belongs to the bacterial solute-binding protein 5 family.

The protein localises to the periplasm. In Brucella abortus biovar 1 (strain 9-941), this protein is Putative binding protein BruAb2_0648.